Reading from the N-terminus, the 216-residue chain is ATP phosphoribosyltransferase (216 aa).

The protein belongs to the ATP phosphoribosyltransferase family. Short subfamily. In terms of assembly, heteromultimer composed of HisG and HisZ subunits.

Its subcellular location is the cytoplasm. It catalyses the reaction 1-(5-phospho-beta-D-ribosyl)-ATP + diphosphate = 5-phospho-alpha-D-ribose 1-diphosphate + ATP. The protein operates within amino-acid biosynthesis; L-histidine biosynthesis; L-histidine from 5-phospho-alpha-D-ribose 1-diphosphate: step 1/9. In terms of biological role, catalyzes the condensation of ATP and 5-phosphoribose 1-diphosphate to form N'-(5'-phosphoribosyl)-ATP (PR-ATP). Has a crucial role in the pathway because the rate of histidine biosynthesis seems to be controlled primarily by regulation of HisG enzymatic activity. This chain is ATP phosphoribosyltransferase, found in Streptococcus thermophilus (strain ATCC BAA-491 / LMD-9).